The sequence spans 358 residues: MTERGLRGESITREEALEILRSSDDELMSIIAAAGKVRRHFFDNRVRLNYLVNLKSGLCPEDCSYCSQRLGSRAEIMKYSWADPQKVHDAVEAGIAGGARRVCMVASGHGPSRRDVERVNGMVRSLKADHPDVEVCVCLGFVDDEKAASIKEAGADAYNHNANTARSHYGKICSTHSYEDRMDTVEVLKRNGLSPCSGVIAGMGETDEEFVDVIFDLRKHGVDSVPVNFLLPFEGTPLAGGAQHITPQWCLKRLAMVRFAHPDSEVRAAAGREQHIRTMQPLALEVVNSIFLGDYLTSEGAAGAADLQMIEDGGFIPEGADGQPMVHTDVNSHHSANLPVNAVPIRHRGIGTEVPANA.

Residues 44 to 272 (NRVRLNYLVN…DSEVRAAAGR (229 aa)) enclose the Radical SAM core domain. Residues Cys59, Cys63, and Cys66 each coordinate [4Fe-4S] cluster. Cys103, Cys136, Cys196, and Arg267 together coordinate [2Fe-2S] cluster.

It belongs to the radical SAM superfamily. Biotin synthase family. In terms of assembly, homodimer. The cofactor is [4Fe-4S] cluster. [2Fe-2S] cluster is required as a cofactor.

The catalysed reaction is (4R,5S)-dethiobiotin + (sulfur carrier)-SH + 2 reduced [2Fe-2S]-[ferredoxin] + 2 S-adenosyl-L-methionine = (sulfur carrier)-H + biotin + 2 5'-deoxyadenosine + 2 L-methionine + 2 oxidized [2Fe-2S]-[ferredoxin]. The protein operates within cofactor biosynthesis; biotin biosynthesis; biotin from 7,8-diaminononanoate: step 2/2. In terms of biological role, catalyzes the conversion of dethiobiotin (DTB) to biotin by the insertion of a sulfur atom into dethiobiotin via a radical-based mechanism. The protein is Biotin synthase of Cutibacterium acnes (strain DSM 16379 / KPA171202) (Propionibacterium acnes).